The sequence spans 191 residues: Cytochrome c oxidase assembly protein CtaG (191 aa).

Residues 1 to 9 (MALNGPQKT) are Cytoplasmic-facing. Residues 10–30 (VVQLVSVVVVMGGLAWASVPF) traverse the membrane as a helical; Signal-anchor for type II membrane protein segment. Topologically, residues 31 to 191 (YDWFCRVTGF…LDAGEKTNTN (161 aa)) are periplasmic.

This sequence belongs to the COX11/CtaG family.

It localises to the cell inner membrane. Functionally, exerts its effect at some terminal stage of cytochrome c oxidase synthesis, probably by being involved in the insertion of the copper B into subunit I. In Ruegeria pomeroyi (strain ATCC 700808 / DSM 15171 / DSS-3) (Silicibacter pomeroyi), this protein is Cytochrome c oxidase assembly protein CtaG.